The primary structure comprises 597 residues: tRNA uridine 5-carboxymethylaminomethyl modification enzyme MnmG (597 aa).

Residue 10 to 15 (GGGHAG) coordinates FAD. 267 to 281 (GPRYCPSIEDKVVRF) contributes to the NAD(+) binding site.

The protein belongs to the MnmG family. As to quaternary structure, homodimer. Heterotetramer of two MnmE and two MnmG subunits. The cofactor is FAD.

Its subcellular location is the cytoplasm. Its function is as follows. NAD-binding protein involved in the addition of a carboxymethylaminomethyl (cmnm) group at the wobble position (U34) of certain tRNAs, forming tRNA-cmnm(5)s(2)U34. The sequence is that of tRNA uridine 5-carboxymethylaminomethyl modification enzyme MnmG from Thermus thermophilus (strain ATCC BAA-163 / DSM 7039 / HB27).